Consider the following 152-residue polypeptide: Endoribonuclease YbeY (152 aa).

Zn(2+)-binding residues include histidine 116, histidine 120, and histidine 126.

It belongs to the endoribonuclease YbeY family. Requires Zn(2+) as cofactor.

The protein resides in the cytoplasm. In terms of biological role, single strand-specific metallo-endoribonuclease involved in late-stage 70S ribosome quality control and in maturation of the 3' terminus of the 16S rRNA. This Mycoplasma mobile (strain ATCC 43663 / 163K / NCTC 11711) (Mesomycoplasma mobile) protein is Endoribonuclease YbeY.